The chain runs to 593 residues: Progranulin (593 aa).

A signal peptide spans 1–17 (MWTLVSWVALTAGLVAG). N-linked (GlcNAc...) asparagine glycosylation occurs at Asn118. 2 cysteine pairs are disulfide-bonded: Cys126-Cys139 and Cys133-Cys149. Residues Asn236 and Asn265 are each glycosylated (N-linked (GlcNAc...) asparagine). Intrachain disulfides connect Cys284–Cys296, Cys290–Cys306, Cys297–Cys314, Cys307–Cys321, Cys315–Cys328, Cys322–Cys335, Cys366–Cys378, Cys372–Cys388, Cys397–Cys410, and Cys404–Cys416. Asn368 carries an N-linked (GlcNAc...) asparagine glycan. Asn530 is a glycosylation site (N-linked (GlcNAc...) asparagine).

This sequence belongs to the granulin family. Progranulin is secreted as a homodimer. Interacts with SLPI; interaction protects progranulin from proteolysis. Interacts (via region corresponding to granulin-7 peptide) with CTSD; stabilizes CTSD and increases its proteolytic activity. Interacts (via region corresponding to granulin-7 peptide) with SORT1; this interaction mediates endocytosis and lysosome delivery of progranulin; interaction occurs at the neuronal cell surface in a stressed nervous system. Interacts with PSAP; facilitates lysosomal delivery of progranulin from the extracellular space and the biosynthetic pathway. Forms a complex with PSAP and M6PR; PSAP bridges the binding between progranulin and M6PR. Forms a complex with PSAP and SORT1; progranulin bridges the interaction between PSAP and SORT1; facilitates lysosomal targeting of PSAP via SORT1; interaction enhances PSAP uptake in primary cortical neurons. Interacts (via regions corresponding to granulin-2 and granulin-7 peptides) with GBA1; this interaction prevents aggregation of GBA1-SCARB2 complex via interaction with HSPA1A upon stress. Interacts (via region corresponding to granulin-7 peptide) with HSPA1A; mediates recruitment of HSPA1A to GBA1 and prevents GBA1 aggregation in response to stress. In terms of processing, cleaved by ELANE; proteolysis is blocked by SLPI and is concentration- and time-dependent and induces CXCL8/IL-8 production; granulin-3 and granulin-4 are resistant to ELANE. Cleaved by CTSL in lysosome thus regulating the maturation and turnover of progranulin within the lysosome. In terms of tissue distribution, in myelogenous leukemic cell lines of promonocytic, promyelocytic, and proerythroid lineage, in fibroblasts, and very strongly in epithelial cell lines. Present in inflammatory cells and bone marrow. Highest levels in kidney.

It localises to the secreted. It is found in the lysosome. In terms of biological role, secreted protein that acts as a key regulator of lysosomal function and as a growth factor involved in inflammation, wound healing and cell proliferation. Regulates protein trafficking to lysosomes, and also the activity of lysosomal enzymes. Also facilitates the acidification of lysosomes, causing degradation of mature CTSD by CTSB. In addition, functions as a wound-related growth factor that acts directly on dermal fibroblasts and endothelial cells to promote division, migration and the formation of capillary-like tubule structures. Also promotes epithelial cell proliferation by blocking TNF-mediated neutrophil activation preventing release of oxidants and proteases. Moreover, modulates inflammation in neurons by preserving neurons survival, axonal outgrowth and neuronal integrity. Promotes proliferation of the epithelial cell line A431 in culture. Functionally, inhibits epithelial cell proliferation and induces epithelial cells to secrete IL-8. Its function is as follows. Stabilizes CTSD through interaction with CTSD leading to maintain its aspartic-type peptidase activity. This chain is Progranulin, found in Homo sapiens (Human).